The chain runs to 29 residues: Bacteriocin (29 aa).

The protein localises to the secreted. Its function is as follows. Has antibacterial activity against strains of L.monocytogenes, L.lactis, B.subtilis, S.typhi, S.aureus, C.perfringens, E.aerogenes and M.luteus but not against E.coli, S.sonnei, S.pneumoniae, S.faecalis, P.aeruginosa, K.pneumoniae or P.vulgaris. This chain is Bacteriocin, found in Lactococcus lactis subsp. lactis (Streptococcus lactis).